The following is a 987-amino-acid chain: SNF2 domain-containing protein ENL1 (987 aa).

2 disordered regions span residues 1–172 and 224–245; these read MASP…AYGG and FGDYDDEDDIDQDAENGKENHA. Composition is skewed to pro residues over residues 18-27 and 51-71; these read TPPAPTPLAA and NPNPNPNPNPKPPPPPPPQEP. A compositionally biased stretch (basic and acidic residues) spans 99–110; it reads DSIRDILDDLTT. Positions 141–156 are enriched in polar residues; the sequence is PSQSQLNDGTKPSSSF. The span at 226 to 237 shows a compositional bias: acidic residues; it reads DYDDEDDIDQDA. A Helicase ATP-binding domain is found at 292 to 466; that stretch reads WVLHCRGTGG…WALFYFCCPE (175 aa). 305-312 lines the ATP pocket; it reads DDMGLGKT. The short motif at 417 to 420 is the DEAH box element; it reads DEGH. One can recognise a Helicase C-terminal domain in the interval 645–801; the sequence is SLLQNLVSEG…TRYFSKRDIQ (157 aa).

The protein belongs to the SNF2/RAD54 helicase family. In terms of tissue distribution, expressed in ovaries, roots, shoots and leaves.

Its subcellular location is the cytoplasm. The protein localises to the chromosome. Its function is as follows. DNA helicase that acts as an essential component of the spindle assembly checkpoint. Plays an indispensable role in the development of seed endosperm. Is required to secure sister chromosome separation during endosperm syncytial mitosis, which involves extremely rapid free nuclear cycles. This Oryza sativa subsp. japonica (Rice) protein is SNF2 domain-containing protein ENL1.